The primary structure comprises 185 residues: Neuronal vesicle trafficking-associated protein 1 (185 aa).

At 1 to 82 (MVKLGNNFAE…ITEGVTERFK (82 aa)) the chain is on the cytoplasmic side. A helical; Signal-anchor for type II membrane protein transmembrane segment spans residues 83 to 103 (VSVLVLFALAFLTCVVFLVVY). The Lumenal portion of the chain corresponds to 104–185 (KVYKYDRACP…QETEAAEKSA (82 aa)). Positions 129–164 (ESYYTEQDSSAREKFYTVINHYNLAKQSITRSVSPW) are required for GRIP1 interaction.

This sequence belongs to the NSG family. In terms of assembly, forms a complex with GRIP1, GRIA2 and STX12; controls the intracellular fate of AMPAR and the endosomal sorting of the GRIA2 subunit toward recycling and membrane targeting. Interacts with GRIP1. Interacts with STX12. Interacts with APP; could regulate APP processing. Interacts with FAM171A1. In terms of tissue distribution, widely expressed in brain and spinal cord. Expressed in neurons during maturation and synapse formation.

The protein localises to the membrane. It localises to the golgi apparatus. The protein resides in the trans-Golgi network membrane. It is found in the endosome membrane. Its subcellular location is the cell projection. The protein localises to the dendrite. It localises to the early endosome membrane. The protein resides in the late endosome membrane. It is found in the lysosome lumen. Its subcellular location is the recycling endosome membrane. The protein localises to the cytoplasmic vesicle membrane. It localises to the golgi stack membrane. The protein resides in the endosome. It is found in the multivesicular body membrane. Its subcellular location is the endoplasmic reticulum membrane. Its function is as follows. Plays a role in the recycling mechanism in neurons of multiple receptors, including AMPAR, APP and L1CAM and acts at the level of early endosomes to promote sorting of receptors toward a recycling pathway. Regulates sorting and recycling of GRIA2 through interaction with GRIP1 and then contributes to the regulation of synaptic transmission and plasticity by affecting the recycling and targeting of AMPA receptors to the synapse. Is required for faithful sorting of L1CAM to axons by facilitating trafficking from somatodendritic early endosome or the recycling endosome. In an other hand, induces apoptosis via the activation of CASP3 in response to DNA damage. This chain is Neuronal vesicle trafficking-associated protein 1, found in Rattus norvegicus (Rat).